The following is a 162-amino-acid chain: Calcium vector protein (162 aa).

An N-acetylalanine modification is found at A2. EF-hand domains follow at residues E12 to T47, T49 to R84, D86 to E121, and L123 to A158. K96 carries the N6,N6,N6-trimethyllysine modification. 4 residues coordinate Ca(2+): D99, N101, D103, and E110. Position 117 is an N6,N6,N6-trimethyllysine (K117). Positions 136, 138, 140, and 147 each coordinate Ca(2+).

The protein resides in the cytoplasm. In terms of biological role, the exact function of this protein is not yet known. It interacts with CAVPT, a protein also of unknown function, in a calcium-dependent way. This protein binds two calcium ions. The chain is Calcium vector protein from Branchiostoma lanceolatum (Common lancelet).